The chain runs to 513 residues: Histidine ammonia-lyase (513 aa).

A cross-link (5-imidazolinone (Ala-Gly)) is located at residues 144 to 146 (ASG). Residue Ser145 is modified to 2,3-didehydroalanine (Ser).

This sequence belongs to the PAL/histidase family. Contains an active site 4-methylidene-imidazol-5-one (MIO), which is formed autocatalytically by cyclization and dehydration of residues Ala-Ser-Gly.

It localises to the cytoplasm. The catalysed reaction is L-histidine = trans-urocanate + NH4(+). It participates in amino-acid degradation; L-histidine degradation into L-glutamate; N-formimidoyl-L-glutamate from L-histidine: step 1/3. The protein is Histidine ammonia-lyase of Streptococcus pyogenes serotype M1.